The primary structure comprises 557 residues: Dihydroxy-acid dehydratase (557 aa).

Asp-78 provides a ligand contact to Mg(2+). Residue Cys-119 participates in [2Fe-2S] cluster binding. Mg(2+) is bound by residues Asp-120 and Lys-121. The residue at position 121 (Lys-121) is an N6-carboxylysine. Cys-192 is a [2Fe-2S] cluster binding site. Glu-443 lines the Mg(2+) pocket. Catalysis depends on Ser-469, which acts as the Proton acceptor.

This sequence belongs to the IlvD/Edd family. As to quaternary structure, homodimer. Requires [2Fe-2S] cluster as cofactor. It depends on Mg(2+) as a cofactor.

The catalysed reaction is (2R)-2,3-dihydroxy-3-methylbutanoate = 3-methyl-2-oxobutanoate + H2O. It catalyses the reaction (2R,3R)-2,3-dihydroxy-3-methylpentanoate = (S)-3-methyl-2-oxopentanoate + H2O. Its pathway is amino-acid biosynthesis; L-isoleucine biosynthesis; L-isoleucine from 2-oxobutanoate: step 3/4. It participates in amino-acid biosynthesis; L-valine biosynthesis; L-valine from pyruvate: step 3/4. Functionally, functions in the biosynthesis of branched-chain amino acids. Catalyzes the dehydration of (2R,3R)-2,3-dihydroxy-3-methylpentanoate (2,3-dihydroxy-3-methylvalerate) into 2-oxo-3-methylpentanoate (2-oxo-3-methylvalerate) and of (2R)-2,3-dihydroxy-3-methylbutanoate (2,3-dihydroxyisovalerate) into 2-oxo-3-methylbutanoate (2-oxoisovalerate), the penultimate precursor to L-isoleucine and L-valine, respectively. The sequence is that of Dihydroxy-acid dehydratase from Sulfurihydrogenibium sp. (strain YO3AOP1).